The sequence spans 508 residues: Maturase K (508 aa).

This sequence belongs to the intron maturase 2 family. MatK subfamily.

It is found in the plastid. It localises to the chloroplast. Functionally, usually encoded in the trnK tRNA gene intron. Probably assists in splicing its own and other chloroplast group II introns. This Ranunculus trichophyllus (Whitewater crowfoot) protein is Maturase K.